We begin with the raw amino-acid sequence, 692 residues long: Elongation factor G (692 aa).

One can recognise a tr-type G domain in the interval 8–282; sequence EKTRNIGIMA…AVLDYLPAPT (275 aa). Residues 17–24, 81–85, and 135–138 contribute to the GTP site; these read AHIDAGKT, DTPGH, and NKMD. Phosphoserine is present on residues S213, S302, S569, and S680.

This sequence belongs to the TRAFAC class translation factor GTPase superfamily. Classic translation factor GTPase family. EF-G/EF-2 subfamily. Phosphorylated on threonine residue(s). Phosphorylated by PrkC and dephosphorylated by PrpC, in vitro.

It localises to the cytoplasm. Catalyzes the GTP-dependent ribosomal translocation step during translation elongation. During this step, the ribosome changes from the pre-translocational (PRE) to the post-translocational (POST) state as the newly formed A-site-bound peptidyl-tRNA and P-site-bound deacylated tRNA move to the P and E sites, respectively. Catalyzes the coordinated movement of the two tRNA molecules, the mRNA and conformational changes in the ribosome. The chain is Elongation factor G (fusA) from Bacillus subtilis (strain 168).